The sequence spans 610 residues: Sterol O-acyltransferase 1 (610 aa).

Residues Ser21 and Ser45 each carry the phosphoserine modification. A disordered region spans residues 41-81 (SMEVSPRSSTTSLVEPVESTEGVESTEAERVAGKQEQEEEY). The segment covering 67–76 (EAERVAGKQE) has biased composition (basic and acidic residues). Transmembrane regions (helical) follow at residues 182–202 (LESN…WIAI), 229–249 (LFTI…VVFV), 264–284 (GFVA…PIYV), 371–391 (ISCS…QINY), and 409–429 (IIGT…PVAM). The FYXDWWN motif motif lies at 491–497 (FYGDWWN). The next 2 membrane-spanning stretches (helical) occupy residues 535–555 (ATLF…FAIF) and 590–610 (VVFS…YLTL). Residue His547 is part of the active site.

It belongs to the membrane-bound acyltransferase family. Sterol o-acyltransferase subfamily.

The protein resides in the endoplasmic reticulum membrane. It carries out the reaction lanosterol + an acyl-CoA = lanosteryl ester + CoA. Sterol O-acyltransferase that catalyzes the formation of stery esters. The polypeptide is Sterol O-acyltransferase 1 (Saccharomyces cerevisiae (strain ATCC 204508 / S288c) (Baker's yeast)).